A 129-amino-acid chain; its full sequence is Small ribosomal subunit protein uS11 (129 aa).

It belongs to the universal ribosomal protein uS11 family. As to quaternary structure, part of the 30S ribosomal subunit. Interacts with proteins S7 and S18. Binds to IF-3.

Its function is as follows. Located on the platform of the 30S subunit, it bridges several disparate RNA helices of the 16S rRNA. Forms part of the Shine-Dalgarno cleft in the 70S ribosome. The polypeptide is Small ribosomal subunit protein uS11 (Rhodopseudomonas palustris (strain BisB5)).